The chain runs to 185 residues: Elongation factor P (185 aa).

This sequence belongs to the elongation factor P family.

The protein localises to the cytoplasm. The protein operates within protein biosynthesis; polypeptide chain elongation. Involved in peptide bond synthesis. Stimulates efficient translation and peptide-bond synthesis on native or reconstituted 70S ribosomes in vitro. Probably functions indirectly by altering the affinity of the ribosome for aminoacyl-tRNA, thus increasing their reactivity as acceptors for peptidyl transferase. In Clostridium botulinum (strain ATCC 19397 / Type A), this protein is Elongation factor P.